The primary structure comprises 470 residues: Probable G-protein coupled receptor 152 (470 aa).

A disordered region spans residues 1-25 (MDTTMEADLGATGHRPRTELDDEDS). Residues 1 to 33 (MDTTMEADLGATGHRPRTELDDEDSYPQGGWDT) lie on the Extracellular side of the membrane. Residues 34 to 54 (VFLVALLLLGLPANGLMAWLA) traverse the membrane as a helical segment. Residues 55–65 (GSQARHGAGTR) are Cytoplasmic-facing. A helical membrane pass occupies residues 66-86 (LALLLLSLALSDFLFLAAAAF). Topologically, residues 87-105 (QILEIRHGGHWPLGTAACR) are extracellular. The cysteines at positions 104 and 182 are disulfide-linked. Residues 106 to 126 (FYYFLWGVSYSSGLFLLAALS) traverse the membrane as a helical segment. At 127 to 148 (LDRCLLALCPHWYPGHRPVRLP) the chain is on the cytoplasmic side. A helical membrane pass occupies residues 149 to 169 (LWVCAGVWVLATLFSVPWLVF). Residues 170 to 194 (PEAAVWWYDLVICLDFWDSEELSLR) lie on the Extracellular side of the membrane. The helical transmembrane segment at 195–215 (MLEVLGGFLPFLLLLVCHVLT) threads the bilayer. Residues 216–257 (QATACRTCHRQQQPAACRGFARVARTILSAYVVLRLPYQLAQ) lie on the Cytoplasmic side of the membrane. Residues 258 to 278 (LLYLAFLWDVYSGYLLWEALV) traverse the membrane as a helical segment. The Extracellular segment spans residues 279–281 (YSD). A helical transmembrane segment spans residues 282–302 (YLILLNSCLSPFLCLMASADL). At 303 to 470 (RTLLRSVLSS…PEAAPGAGPT (168 aa)) the chain is on the cytoplasmic side. The tract at residues 322–470 (PGSFTPTEPQ…PEAAPGAGPT (149 aa)) is disordered. Composition is skewed to polar residues over residues 325-335 (FTPTEPQTQLD) and 348-414 (AQSQ…NVQT). Residues 415 to 425 (PAPAASSVPSP) are compositionally biased toward low complexity.

Belongs to the G-protein coupled receptor 1 family.

It localises to the cell membrane. Its function is as follows. Orphan receptor. The sequence is that of Probable G-protein coupled receptor 152 (GPR152) from Homo sapiens (Human).